The following is a 344-amino-acid chain: N-acetyl-gamma-glutamyl-phosphate reductase (344 aa).

Cysteine 148 is an active-site residue.

The protein belongs to the NAGSA dehydrogenase family. Type 1 subfamily.

The protein localises to the cytoplasm. The enzyme catalyses N-acetyl-L-glutamate 5-semialdehyde + phosphate + NADP(+) = N-acetyl-L-glutamyl 5-phosphate + NADPH + H(+). Its pathway is amino-acid biosynthesis; L-arginine biosynthesis; N(2)-acetyl-L-ornithine from L-glutamate: step 3/4. In terms of biological role, catalyzes the NADPH-dependent reduction of N-acetyl-5-glutamyl phosphate to yield N-acetyl-L-glutamate 5-semialdehyde. This is N-acetyl-gamma-glutamyl-phosphate reductase from Clostridium beijerinckii (strain ATCC 51743 / NCIMB 8052) (Clostridium acetobutylicum).